We begin with the raw amino-acid sequence, 510 residues long: Conditioned medium factor receptor 1 (510 aa).

Residues Met1 to Lys36 are Cytoplasmic-facing. Residues Tyr37–Val55 traverse the membrane as a helical segment. Residues Lys56–Asp510 lie on the Extracellular side of the membrane.

Its subcellular location is the membrane. Functionally, receptor for cmfA, that appears to mediate the G-independent cmfA signal transduction. This chain is Conditioned medium factor receptor 1 (cmfB), found in Dictyostelium discoideum (Social amoeba).